The sequence spans 526 residues: GMP synthase [glutamine-hydrolyzing] (526 aa).

Residues 4 to 202 (KILILDFGSQ…VHDICGCDQS (199 aa)) form the Glutamine amidotransferase type-1 domain. Residue Cys-81 is the Nucleophile of the active site. Catalysis depends on residues His-176 and Glu-178. The GMPS ATP-PPase domain occupies 203-395 (WNMPDYVETA…LGLPHDMVYR (193 aa)). Residue 230-236 (SGGVDSS) participates in ATP binding.

Homodimer.

The enzyme catalyses XMP + L-glutamine + ATP + H2O = GMP + L-glutamate + AMP + diphosphate + 2 H(+). It participates in purine metabolism; GMP biosynthesis; GMP from XMP (L-Gln route): step 1/1. Catalyzes the synthesis of GMP from XMP. This chain is GMP synthase [glutamine-hydrolyzing], found in Methylobacillus flagellatus (strain ATCC 51484 / DSM 6875 / VKM B-1610 / KT).